The following is a 563-amino-acid chain: BOS complex subunit NCLN (563 aa).

The signal sequence occupies residues 1 to 42 (MLEEAGEVLENVLKASCLPLGFIVFLPAVLLLVAPPLPAADA). Residues 43–522 (AHEFTVYRMQ…VMNAYRVKPA (480 aa)) lie on the Lumenal side of the membrane. N-linked (GlcNAc...) asparagine glycosylation is found at Asn-241 and Asn-428. A helical membrane pass occupies residues 523 to 543 (IFDLLLALCIGAYLGMAYTAV). At 544–563 (QHFHVLYKTVQRLLLKAKAQ) the chain is on the cytoplasmic side.

The protein belongs to the nicastrin family. In terms of assembly, component of the back of Sec61 (BOS) complex, composed of NCLN/Nicalin, NOMO1 and TMEM147. The BOS complex is part of the multi-pass translocon (MPT) complex, composed of three subcomplexes, the GEL complex (composed of RAB5IF/OPTI and TMCO1), the BOS complex (composed of NCLN/Nicalin, NOMO1 and TMEM147) and the PAT complex (composed of WDR83OS/Asterix and CCDC47). The MPT complex associates with the SEC61 complex.

It localises to the endoplasmic reticulum membrane. Functionally, component of the multi-pass translocon (MPT) complex that mediates insertion of multi-pass membrane proteins into the lipid bilayer of membranes. The MPT complex takes over after the SEC61 complex: following membrane insertion of the first few transmembrane segments of proteins by the SEC61 complex, the MPT complex occludes the lateral gate of the SEC61 complex to promote insertion of subsequent transmembrane regions. May antagonize Nodal signaling and subsequent organization of axial structures during mesodermal patterning, via its interaction with NOMO. This is BOS complex subunit NCLN (Ncln) from Mus musculus (Mouse).